Here is an 875-residue protein sequence, read N- to C-terminus: Alanine--tRNA ligase (875 aa).

4 residues coordinate Zn(2+): His-564, His-568, Cys-666, and His-670.

The protein belongs to the class-II aminoacyl-tRNA synthetase family. As to quaternary structure, homotetramer. Zn(2+) is required as a cofactor.

The protein localises to the cytoplasm. The enzyme catalyses tRNA(Ala) + L-alanine + ATP = L-alanyl-tRNA(Ala) + AMP + diphosphate. In terms of biological role, catalyzes the attachment of alanine to tRNA(Ala) in a two-step reaction: alanine is first activated by ATP to form Ala-AMP and then transferred to the acceptor end of tRNA(Ala). Also edits incorrectly charged Ser-tRNA(Ala) and Gly-tRNA(Ala) via its editing domain. The chain is Alanine--tRNA ligase from Enterobacter sp. (strain 638).